We begin with the raw amino-acid sequence, 31 residues long: U6-ctenitoxin-Co1a (31 aa).

Disulfide bonds link Cys2–Cys18 and Cys9–Cys23.

In terms of tissue distribution, expressed by the venom gland.

The protein localises to the secreted. Functionally, antagonist of L-type calcium channels (Cav1/CACNA1). This is U6-ctenitoxin-Co1a from Ctenus ornatus (Brazilian spider).